A 249-amino-acid polypeptide reads, in one-letter code: DNA polymerase sliding clamp (249 aa).

It belongs to the PCNA family. In terms of assembly, the subunits circularize to form a toroid; DNA passes through its center. Replication factor C (RFC) is required to load the toroid on the DNA. Homotrimer. Interacts with NucS.

Its function is as follows. Sliding clamp subunit that acts as a moving platform for DNA processing. Responsible for tethering the catalytic subunit of DNA polymerase and other proteins to DNA during high-speed replication. Regulates activity of NucS endonuclease and prevents non-specific cleavage. The chain is DNA polymerase sliding clamp from Pyrococcus abyssi (strain GE5 / Orsay).